The sequence spans 158 residues: Small ribosomal subunit protein uS7 (158 aa).

The protein belongs to the universal ribosomal protein uS7 family. Part of the 30S ribosomal subunit. Contacts proteins S9 and S11.

One of the primary rRNA binding proteins, it binds directly to 16S rRNA where it nucleates assembly of the head domain of the 30S subunit. Is located at the subunit interface close to the decoding center, probably blocks exit of the E-site tRNA. This chain is Small ribosomal subunit protein uS7, found in Porphyromonas gingivalis (strain ATCC BAA-308 / W83).